The primary structure comprises 905 residues: DNA gyrase subunit A (905 aa).

Positions 35-524 (IPDVRDGLKP…GEFDQDIEDL (490 aa)) constitute a Topo IIA-type catalytic domain. The active-site O-(5'-phospho-DNA)-tyrosine intermediate is the Tyr-123. Residues 551-557 (QKRGGKG) carry the GyrA-box motif. The interval 885-905 (TAESEEDSELEEEGLEQSEEV) is disordered. A compositionally biased stretch (acidic residues) spans 886–905 (AESEEDSELEEEGLEQSEEV).

This sequence belongs to the type II topoisomerase GyrA/ParC subunit family. As to quaternary structure, heterotetramer, composed of two GyrA and two GyrB chains. In the heterotetramer, GyrA contains the active site tyrosine that forms a transient covalent intermediate with DNA, while GyrB binds cofactors and catalyzes ATP hydrolysis.

Its subcellular location is the cytoplasm. It catalyses the reaction ATP-dependent breakage, passage and rejoining of double-stranded DNA.. In terms of biological role, a type II topoisomerase that negatively supercoils closed circular double-stranded (ds) DNA in an ATP-dependent manner to modulate DNA topology and maintain chromosomes in an underwound state. Negative supercoiling favors strand separation, and DNA replication, transcription, recombination and repair, all of which involve strand separation. Also able to catalyze the interconversion of other topological isomers of dsDNA rings, including catenanes and knotted rings. Type II topoisomerases break and join 2 DNA strands simultaneously in an ATP-dependent manner. The protein is DNA gyrase subunit A of Rickettsia conorii (strain ATCC VR-613 / Malish 7).